The following is a 202-amino-acid chain: Thymidylate kinase (202 aa).

13-20 (GTDGAGKS) is a binding site for ATP.

It belongs to the thymidylate kinase family.

The enzyme catalyses dTMP + ATP = dTDP + ADP. In terms of biological role, phosphorylation of dTMP to form dTDP in both de novo and salvage pathways of dTTP synthesis. This is Thymidylate kinase from Desulfotalea psychrophila (strain LSv54 / DSM 12343).